Reading from the N-terminus, the 526-residue chain is Peptide chain release factor 3 (526 aa).

A tr-type G domain is found at 9-277; the sequence is DKRRTFAIIS…GIVEWAPKPL (269 aa). GTP contacts are provided by residues 18-25, 86-90, and 140-143; these read SHPDAGKT, DTPGH, and NKLD.

It belongs to the TRAFAC class translation factor GTPase superfamily. Classic translation factor GTPase family. PrfC subfamily.

The protein localises to the cytoplasm. Functionally, increases the formation of ribosomal termination complexes and stimulates activities of RF-1 and RF-2. It binds guanine nucleotides and has strong preference for UGA stop codons. It may interact directly with the ribosome. The stimulation of RF-1 and RF-2 is significantly reduced by GTP and GDP, but not by GMP. In Shewanella putrefaciens (strain CN-32 / ATCC BAA-453), this protein is Peptide chain release factor 3.